The chain runs to 606 residues: Elongation factor 4 (606 aa).

One can recognise a tr-type G domain in the interval 10–192; that stretch reads KNIRNFSIIA…ALVARVPPPQ (183 aa). GTP contacts are provided by residues 22-27 and 139-142; these read DHGKST and NKID.

The protein belongs to the TRAFAC class translation factor GTPase superfamily. Classic translation factor GTPase family. LepA subfamily.

It localises to the cell inner membrane. It carries out the reaction GTP + H2O = GDP + phosphate + H(+). Its function is as follows. Required for accurate and efficient protein synthesis under certain stress conditions. May act as a fidelity factor of the translation reaction, by catalyzing a one-codon backward translocation of tRNAs on improperly translocated ribosomes. Back-translocation proceeds from a post-translocation (POST) complex to a pre-translocation (PRE) complex, thus giving elongation factor G a second chance to translocate the tRNAs correctly. Binds to ribosomes in a GTP-dependent manner. The sequence is that of Elongation factor 4 from Nitrosococcus oceani (strain ATCC 19707 / BCRC 17464 / JCM 30415 / NCIMB 11848 / C-107).